Reading from the N-terminus, the 357-residue chain is Putative lipopolysaccharide heptosyltransferase 4 (357 aa).

It catalyses the reaction alpha-D-Glc-(1-&gt;2)-alpha-D-Glc-(1-&gt;3)-[alpha-D-Gal-(1-&gt;6)]-alpha-D-Glc-(1-&gt;3)-[L-alpha-D-Hep-(1-&gt;7)]-4-O-PO3(2-)-L-alpha-D-Hep-(1-&gt;3)-4-O-PO3(2-)-L-alpha-D-Hep-(1-&gt;5)-[alpha-Kdo-(2-&gt;4)]-alpha-Kdo-(2-&gt;6)-lipid A + ADP-L-glycero-beta-D-manno-heptose = lipid A-core + ADP + H(+). It participates in bacterial outer membrane biogenesis; LPS core biosynthesis. Functionally, transferase involved in the biosynthesis of the core oligosaccharide region of lipopolysaccharide (LPS). May catalyze the addition of the terminal heptose (heptose IV) to the outer-core glucose III, the last step of the lipid A-core oligosaccharide biosynthesis. The chain is Putative lipopolysaccharide heptosyltransferase 4 from Escherichia coli (strain K12).